The sequence spans 109 residues: uncharacterized protein (109 aa).

2 consecutive transmembrane segments (helical) span residues 24 to 44 and 68 to 88; these read SLGI…SAFV and VIVL…SIFI.

It is found in the membrane. This is an uncharacterized protein from Saccharomyces cerevisiae (strain ATCC 204508 / S288c) (Baker's yeast).